The primary structure comprises 338 residues: GTPase Obg (338 aa).

An Obg domain is found at 1 to 159 (MKFLDKAIIH…RILRLELILI (159 aa)). The region spanning 160–333 (AHVGTLGLPN…IVKKIYDFLK (174 aa)) is the OBG-type G domain. Residues 166 to 173 (GLPNSGKS), 191 to 195 (FTTLK), 213 to 216 (DIPG), 283 to 286 (NKID), and 314 to 316 (SAI) contribute to the GTP site. The Mg(2+) site is built by S173 and T193.

It belongs to the TRAFAC class OBG-HflX-like GTPase superfamily. OBG GTPase family. As to quaternary structure, monomer. Mg(2+) serves as cofactor.

It localises to the cytoplasm. Functionally, an essential GTPase which binds GTP, GDP and possibly (p)ppGpp with moderate affinity, with high nucleotide exchange rates and a fairly low GTP hydrolysis rate. Plays a role in control of the cell cycle, stress response, ribosome biogenesis and in those bacteria that undergo differentiation, in morphogenesis control. The sequence is that of GTPase Obg from Buchnera aphidicola subsp. Baizongia pistaciae (strain Bp).